Consider the following 151-residue polypeptide: Small ribosomal subunit protein uS13 (151 aa).

This sequence belongs to the universal ribosomal protein uS13 family. As to quaternary structure, part of the 30S ribosomal subunit. Forms a loose heterodimer with protein S19. Forms two bridges to the 50S subunit in the 70S ribosome.

In terms of biological role, located at the top of the head of the 30S subunit, it contacts several helices of the 16S rRNA. In the 70S ribosome it contacts the 23S rRNA (bridge B1a) and protein L5 of the 50S subunit (bridge B1b), connecting the 2 subunits; these bridges are implicated in subunit movement. This is Small ribosomal subunit protein uS13 from Methanospirillum hungatei JF-1 (strain ATCC 27890 / DSM 864 / NBRC 100397 / JF-1).